Here is a 1411-residue protein sequence, read N- to C-terminus: Nuclear pore complex protein Nup160 homolog (1411 aa).

Part of the nuclear pore complex. Interacts with Nup98.

It is found in the nucleus. Its subcellular location is the nuclear pore complex. Functionally, functions as a component of the nuclear pore complex (NPC). Involved in poly(A)+ RNA transport. Required for nuclear import of Mad. May play a role in double strand break DNA repair. Essential for nephrocyte development. This Drosophila melanogaster (Fruit fly) protein is Nuclear pore complex protein Nup160 homolog (Nup160).